We begin with the raw amino-acid sequence, 219 residues long: Thiamine-phosphate synthase (219 aa).

Residues 44–48 (QFREK) and Asn-79 each bind 4-amino-2-methyl-5-(diphosphooxymethyl)pyrimidine. Mg(2+) contacts are provided by Asp-80 and Asp-99. Position 117 (Ser-117) interacts with 4-amino-2-methyl-5-(diphosphooxymethyl)pyrimidine. Position 143-145 (143-145 (TST)) interacts with 2-[(2R,5Z)-2-carboxy-4-methylthiazol-5(2H)-ylidene]ethyl phosphate. A 4-amino-2-methyl-5-(diphosphooxymethyl)pyrimidine-binding site is contributed by Lys-146. 2-[(2R,5Z)-2-carboxy-4-methylthiazol-5(2H)-ylidene]ethyl phosphate is bound by residues Gly-175 and 195–196 (IS).

It belongs to the thiamine-phosphate synthase family. It depends on Mg(2+) as a cofactor.

It catalyses the reaction 2-[(2R,5Z)-2-carboxy-4-methylthiazol-5(2H)-ylidene]ethyl phosphate + 4-amino-2-methyl-5-(diphosphooxymethyl)pyrimidine + 2 H(+) = thiamine phosphate + CO2 + diphosphate. The enzyme catalyses 2-(2-carboxy-4-methylthiazol-5-yl)ethyl phosphate + 4-amino-2-methyl-5-(diphosphooxymethyl)pyrimidine + 2 H(+) = thiamine phosphate + CO2 + diphosphate. It carries out the reaction 4-methyl-5-(2-phosphooxyethyl)-thiazole + 4-amino-2-methyl-5-(diphosphooxymethyl)pyrimidine + H(+) = thiamine phosphate + diphosphate. It functions in the pathway cofactor biosynthesis; thiamine diphosphate biosynthesis; thiamine phosphate from 4-amino-2-methyl-5-diphosphomethylpyrimidine and 4-methyl-5-(2-phosphoethyl)-thiazole: step 1/1. Its function is as follows. Condenses 4-methyl-5-(beta-hydroxyethyl)thiazole monophosphate (THZ-P) and 2-methyl-4-amino-5-hydroxymethyl pyrimidine pyrophosphate (HMP-PP) to form thiamine monophosphate (TMP). In Bacillus cereus (strain B4264), this protein is Thiamine-phosphate synthase.